We begin with the raw amino-acid sequence, 167 residues long: Leptin (167 aa).

A signal peptide spans 1–21 (MLCGPLCRFLWLWPYLSYVEA). An intrachain disulfide couples Cys-117 to Cys-167.

The protein belongs to the leptin family.

The protein localises to the secreted. Functionally, key player in the regulation of energy balance and body weight control. Once released into the circulation, has central and peripheral effects by binding LEPR, found in many tissues, which results in the activation of several major signaling pathways. In the hypothalamus, acts as an appetite-regulating factor that induces a decrease in food intake and an increase in energy consumption by inducing anorexinogenic factors and suppressing orexigenic neuropeptides, also regulates bone mass and secretion of hypothalamo-pituitary-adrenal hormones. In the periphery, increases basal metabolism, influences reproductive function, regulates pancreatic beta-cell function and insulin secretion, is pro-angiogenic for endothelial cell and affects innate and adaptive immunity. In the arcuate nucleus of the hypothalamus, activates by depolarization POMC neurons inducing FOS and SOCS3 expression to release anorexigenic peptides and inhibits by hyperpolarization NPY neurons inducing SOCS3 with a consequent reduction on release of orexigenic peptides. In addition to its known satiety inducing effect, has a modulatory role in nutrient absorption. In the intestine, reduces glucose absorption by enterocytes by activating PKC and leading to a sequential activation of p38, PI3K and ERK signaling pathways which exerts an inhibitory effect on glucose absorption. Acts as a growth factor on certain tissues, through the activation of different signaling pathways increases expression of genes involved in cell cycle regulation such as CCND1, via JAK2-STAT3 pathway, or VEGFA, via MAPK1/3 and PI3K-AKT1 pathways. May also play an apoptotic role via JAK2-STAT3 pathway and up-regulation of BIRC5 expression. Pro-angiogenic, has mitogenic activity on vascular endothelial cells and plays a role in matrix remodeling by regulating the expression of matrix metalloproteinases (MMPs) and tissue inhibitors of metalloproteinases (TIMPs). In innate immunity, modulates the activity and function of neutrophils by increasing chemotaxis and the secretion of oxygen radicals. Increases phagocytosis by macrophages and enhances secretion of pro-inflammatory mediators. Increases cytotoxic ability of NK cells. Plays a pro-inflammatory role, in synergy with IL1B, by inducing NOS2 which promotes the production of IL6, IL8 and Prostaglandin E2, through a signaling pathway that involves JAK2, PI3K, MAP2K1/MEK1 and MAPK14/p38. In adaptive immunity, promotes the switch of memory T-cells towards T helper-1 cell immune responses. Increases CD4(+)CD25(-) T-cell proliferation and reduces autophagy during TCR (T-cell receptor) stimulation, through MTOR signaling pathway activation and BCL2 up-regulation. The chain is Leptin (LEP) from Felis catus (Cat).